The following is a 128-amino-acid chain: Sulfurtransferase TusD (128 aa).

The active-site Cysteine persulfide intermediate is cysteine 78.

The protein belongs to the DsrE/TusD family. As to quaternary structure, heterohexamer, formed by a dimer of trimers. The hexameric TusBCD complex contains 2 copies each of TusB, TusC and TusD. The TusBCD complex interacts with TusE.

The protein resides in the cytoplasm. In terms of biological role, part of a sulfur-relay system required for 2-thiolation of 5-methylaminomethyl-2-thiouridine (mnm(5)s(2)U) at tRNA wobble positions. Accepts sulfur from TusA and transfers it in turn to TusE. The chain is Sulfurtransferase TusD from Shigella boydii serotype 18 (strain CDC 3083-94 / BS512).